Reading from the N-terminus, the 110-residue chain is Secreted Ly-6/uPAR-related protein 1 (110 aa).

The first 22 residues, 1–22 (MTLRWAMWLLLLAAWSMGYGEA), serve as a signal peptide directing secretion. Positions 24-73 (RCYTCEQPTAINSCKNIAQCKMEDTACKTVLETVEAAFPFNHSPMVTRSC) constitute a UPAR/Ly6 domain. Disulfide bonds link C25–C50, C28–C37, C43–C73, C77–C93, and C94–C99.

As to quaternary structure, homodimer. Interacts with PLAU. Interacts with CHRNA7. As to expression, expressed in skin, eye, whole lung, trachea, esophagus and stomach. Widely expressed in various tissues including spleen and thymus but not pancreas. Expressed in macrophages, dendritic cells, T and B cells. Expressed in lung specifically in ciliated bronchial epithelial cells (at protein level). Expression is decreased in lungs of asthmatic model mice. Expressed in the cornea.

The protein localises to the secreted. Has an antitumor activity. Was found to be a marker of late differentiation of the skin. Implicated in maintaining the physiological and structural integrity of the keratinocyte layers of the skin. In vitro down-regulates keratinocyte proliferation; the function may involve the proposed role as modulator of nicotinic acetylcholine receptors (nAChRs) activity. In vitro inhibits alpha-7-dependent nAChR currents in an allosteric manner. In T cells may be involved in regulation of intracellular Ca(2+) signaling. Seems to have a immunomodulatory function in the cornea. The function may implicate a possible role as a scavenger receptor for PLAU thereby blocking PLAU-dependent functions of PLAUR such as in cell migration and proliferation. This Mus musculus (Mouse) protein is Secreted Ly-6/uPAR-related protein 1 (Slurp1).